Consider the following 232-residue polypeptide: Dehydrogenase OXI1 (232 aa).

An N-terminal signal peptide occupies residues Met-1–Ala-20. Leu-19 provides a ligand contact to NADP(+). N-linked (GlcNAc...) asparagine glycosylation is present at Asn-28. NADP(+)-binding residues include Asp-42, Asn-70, and Lys-103. N-linked (GlcNAc...) asparagine glycosylation is present at Asn-117. Residues Ser-119 and Ser-121 each act as proton donor in the active site. The NADP(+) site is built by Tyr-133, Lys-137, and Thr-168. The Proton acceptor role is filled by Tyr-133. Catalysis depends on Lys-137, which acts as the Lowers pKa of active site Tyr.

The protein belongs to the short-chain dehydrogenases/reductases (SDR) family.

It carries out the reaction a primary alcohol + NAD(+) = an aldehyde + NADH + H(+). The enzyme catalyses a secondary alcohol + NAD(+) = a ketone + NADH + H(+). It functions in the pathway mycotoxin biosynthesis. Its function is as follows. Dehydrogenase; part of the Tox1A locus, one of the 2 loci that mediate the biosynthesis of T-toxin, a family of linear polyketides 37 to 45 carbons in length, of which the major component is 41 carbons, and which leads to high virulence to maize. One of the PKSs (PKS1 or PKS2) could synthesize a precursor, used subsequently by the other PKS as starter unit, to add additional carbons. Variability in the length of the final carbon backbone C35-47 could be achieved by varying the number of condensation cycles, or use of different starter or extender units or might be due to decarboxylation of the penultimate product, catalyzed by DEC1. Additional proteins are required for the biosynthesis of T-toxin, including oxidoreductases RED1, RED2, RED3, LAM1 and OXI1, as well as esterase TOX9. In Cochliobolus heterostrophus (strain C4 / ATCC 48331 / race T) (Southern corn leaf blight fungus), this protein is Dehydrogenase OXI1.